Reading from the N-terminus, the 803-residue chain is Pesticidal crystal protein Cry13Aa (803 aa).

This sequence belongs to the delta endotoxin family.

Functionally, endotoxin with nematicidal activity. This Bacillus thuringiensis protein is Pesticidal crystal protein Cry13Aa (cry13Aa).